The chain runs to 332 residues: MKVTFEQLKAAFNRVLISRGVDSETADACAEMFARTTESGVYSHGVNRFPRFIQQLENGDIIPDAQPKRITSLGAIEQWDAQRSIGNLTAKKMMDRAIELAADHGIGLVALRNANHWMRGGSYGWQAAEKGYIGICWTNSIAVMPPWGAKECRIGTNPLIVAIPSTPITMVDMSMSMFSYGMLEVNRLAGRQLPVDGGFDDEGNLTKEPGVIEKNRRILPMGYWKGSGMSIVLDMIATLLSDGASVAEVTQDNSDEYGISQIFIAIEVDKLIDGPTRDAKLQRIMDYVTTAERADENQAIRLPGHEFTTLLAENRRNGITVDDSVWAKIQAL.

Catalysis depends on His-44, which acts as the Proton donor. NAD(+)-binding positions include 168 to 174 (ITMVDMS), 224 to 225 (WK), and 304 to 306 (GHE).

Belongs to the LDH2/MDH2 oxidoreductase family. DlgD subfamily. In terms of assembly, homodimer.

It is found in the cytoplasm. It catalyses the reaction 3-dehydro-L-gulonate + NAD(+) = 2,3-dioxo-L-gulonate + NADH + H(+). The catalysed reaction is 3-dehydro-L-gulonate + NADP(+) = 2,3-dioxo-L-gulonate + NADPH + H(+). In terms of biological role, catalyzes the reduction of 2,3-diketo-L-gulonate in the presence of NADH, to form 3-keto-L-gulonate. This chain is 2,3-diketo-L-gulonate reductase, found in Escherichia coli O8 (strain IAI1).